A 375-amino-acid polypeptide reads, in one-letter code: Alcohol dehydrogenase 6 (375 aa).

Ser23 carries the post-translational modification Phosphoserine. 7 residues coordinate Zn(2+): Cys47, His69, Cys99, Cys102, Cys105, Cys113, and Cys175. NAD(+) is bound by residues 200–205, Asp224, Lys229, 293–295, and Arg370; these read GLGGVG and VGL.

The protein belongs to the zinc-containing alcohol dehydrogenase family. Class-V subfamily. Dimer. Zn(2+) serves as cofactor.

The protein resides in the cytoplasm. It catalyses the reaction a primary alcohol + NAD(+) = an aldehyde + NADH + H(+). The enzyme catalyses a secondary alcohol + NAD(+) = a ketone + NADH + H(+). In terms of biological role, alcohol dehydrogenase. Catalyzes the NAD-dependent oxidation of primary alcohols to the corresponding aldehydes. Oxidizes secondary alcohols to the corresponding ketones. This Pongo abelii (Sumatran orangutan) protein is Alcohol dehydrogenase 6 (ADH6).